The chain runs to 168 residues: S-ribosylhomocysteine lyase (168 aa).

Positions 54, 58, and 128 each coordinate Fe cation.

Belongs to the LuxS family. Homodimer. Fe cation is required as a cofactor.

The catalysed reaction is S-(5-deoxy-D-ribos-5-yl)-L-homocysteine = (S)-4,5-dihydroxypentane-2,3-dione + L-homocysteine. In terms of biological role, involved in the synthesis of autoinducer 2 (AI-2) which is secreted by bacteria and is used to communicate both the cell density and the metabolic potential of the environment. The regulation of gene expression in response to changes in cell density is called quorum sensing. Catalyzes the transformation of S-ribosylhomocysteine (RHC) to homocysteine (HC) and 4,5-dihydroxy-2,3-pentadione (DPD). In Neisseria meningitidis serogroup C (strain 053442), this protein is S-ribosylhomocysteine lyase.